Here is a 112-residue protein sequence, read N- to C-terminus: Integration host factor subunit alpha (112 aa).

This sequence belongs to the bacterial histone-like protein family. As to quaternary structure, heterodimer of an alpha and a beta chain.

This protein is one of the two subunits of integration host factor, a specific DNA-binding protein that functions in genetic recombination as well as in transcriptional and translational control. The sequence is that of Integration host factor subunit alpha from Sinorhizobium medicae (strain WSM419) (Ensifer medicae).